The primary structure comprises 615 residues: Leucine aminopeptidase 2 (615 aa).

A peptide is bound by residues 139–141 and 271–276; these read QCQ and PYGGME. His-300 contributes to the Zn(2+) binding site. Glu-301 acts as the Proton acceptor in catalysis. 2 residues coordinate Zn(2+): His-304 and Glu-323. Residue Tyr-386 is the Proton donor of the active site.

This sequence belongs to the peptidase M1 family. The cofactor is Zn(2+).

It localises to the cytoplasm. It is found in the nucleus. The enzyme catalyses an epoxide + H2O = an ethanediol. In terms of biological role, aminopeptidase that preferentially cleaves di- and tripeptides. Also has low epoxide hydrolase activity (in vitro). Can hydrolyze the epoxide leukotriene LTA(4) but it forms preferentially 5,6-dihydroxy-7,9,11,14-eicosatetraenoic acid rather than the cytokine leukotriene B(4) as the product compared to the homologous mammalian enzyme (in vitro). This Aspergillus oryzae (strain ATCC 42149 / RIB 40) (Yellow koji mold) protein is Leucine aminopeptidase 2.